The primary structure comprises 314 residues: Pantothenate synthetase (314 aa).

Residue 43–50 (MGALHEGH) participates in ATP binding. H50 acts as the Proton donor in catalysis. Q75 provides a ligand contact to (R)-pantoate. Q75 provides a ligand contact to beta-alanine. The disordered stretch occupies residues 112 to 131 (MYPDGTRTSVHPGPLGDDLE). 161 to 164 (GEKD) lines the ATP pocket. Position 167 (Q167) interacts with (R)-pantoate. ATP is bound by residues V190 and 198–201 (LSSR).

Belongs to the pantothenate synthetase family. As to quaternary structure, homodimer.

It localises to the cytoplasm. It carries out the reaction (R)-pantoate + beta-alanine + ATP = (R)-pantothenate + AMP + diphosphate + H(+). Its pathway is cofactor biosynthesis; (R)-pantothenate biosynthesis; (R)-pantothenate from (R)-pantoate and beta-alanine: step 1/1. In terms of biological role, catalyzes the condensation of pantoate with beta-alanine in an ATP-dependent reaction via a pantoyl-adenylate intermediate. This Mycolicibacterium smegmatis (strain ATCC 700084 / mc(2)155) (Mycobacterium smegmatis) protein is Pantothenate synthetase.